Reading from the N-terminus, the 251-residue chain is Transcriptional regulator CBF1 (251 aa).

The tract at residues 1 to 169 (MVKSHKRTLE…VERKRRESIN (169 aa)) is disordered. Residues 7 to 28 (RTLEKDEEHQEKKKANKISKDD) show a composition bias toward basic and acidic residues. Positions 40–56 (ASDSAHTDTATAAVAAV) are enriched in low complexity. Residues 67-76 (TESSTNQTSA) show a composition bias toward polar residues. A compositionally biased stretch (basic and acidic residues) spans 77–105 (LDKDDKETKDNLNPREETQSSHQEIDIPK). Over residues 107-116 (QLTNQQNLAD) the composition is skewed to polar residues. Low complexity predominate over residues 117–126 (QHQQYQYHQQ). Residues 127 to 140 (LAQTNFKTEPTNSA) show a composition bias toward polar residues. The segment covering 144–167 (HGSEEWHRQRRENHKEVERKRRES) has biased composition (basic and acidic residues). The region spanning 152–200 (QRRENHKEVERKRRESINTGIRELARLIPTTDTNKAQILQRAVEYIKRL) is the bHLH domain. Residues 190-223 (LQRAVEYIKRLKENENNNIEKWTLEKLLTEQAVS) adopt a coiled-coil conformation.

It is found in the nucleus. In terms of biological role, transcription factor that binds ribosomal protein gene promoters and rDNA locus with TBF1. Necessary for the expression of genes involved in assimilation of inorganic sulfate. Also required for the expression of respiratory genes and glycolytic genes. Does not bind to centromeres and is not necessary for efficient chromosome segregationas as does S.cerevisiae CBF1. This Candida albicans (strain SC5314 / ATCC MYA-2876) (Yeast) protein is Transcriptional regulator CBF1 (CBF1).